Consider the following 467-residue polypeptide: Ribosome biogenesis protein YTM1 (467 aa).

Residues 8-95 (IKIKFFTNEE…ETFLSLEYTR (88 aa)) are ubiquitin-like (UBL) domain. A sufficient for interaction with ERB1 and association with 66S pre-ribosomes region spans residues 105–467 (SFNNEDWISS…QINKGSDISK (363 aa)). WD repeat units follow at residues 120–159 (KTLPSVTLSNMMISQPKILSGSYDGIVRTYNMSGNVEKQY), 161–199 (GHSGPIRAVKWVSPTRIVSAGNDRQVRLWKTSADDGSIP), 216–255 (GHKAPVVALAVENTSNRILSAGYDHSIGFWSTNYKEMTTI), 293–333 (SHTQ…CIDT), 335–374 (STGYSLLSIVQLPKSKLLATGSSARHINLHDPRISNNTTE), 382–422 (GHTN…SLYT), and 432–467 (KGADKVFAVSWDNEIGIISGGQDKKIQINKGSDISK).

The protein belongs to the WD repeat WDR12/YTM1 family. As to quaternary structure, component of the NOP7 complex, composed of ERB1, NOP7 and YTM1. The complex is held together by ERB1, which interacts with NOP7 via its N-terminal domain and with YTM1 via a high-affinity interaction between the seven-bladed beta-propeller domains of the 2 proteins. The NOP7 complex associates with the 66S pre-ribosome. Interacts (via UBL domain) with MDN1 (via VWFA/MIDAS domain).

The protein localises to the nucleus. The protein resides in the nucleolus. It is found in the nucleoplasm. Its function is as follows. Component of the NOP7 complex, which is required for maturation of the 25S and 5.8S ribosomal RNAs and formation of the 60S ribosome. The protein is Ribosome biogenesis protein YTM1 of Scheffersomyces stipitis (strain ATCC 58785 / CBS 6054 / NBRC 10063 / NRRL Y-11545) (Yeast).